The sequence spans 1912 residues: Vitellogenin-1 (1912 aa).

The first 15 residues, 1-15 (MRGLISALVLTLVGS), serve as a signal peptide directing secretion. Positions 24–663 (FGENKVYTYN…AGSLIPTMAV (640 aa)) constitute a Vitellogenin domain. Asparagine 163 carries N-linked (GlcNAc...) asparagine glycosylation. The interval 948–972 (DSASGETDNIRDRQSVEDVSSGNSF) is disordered. Asparagine 991 carries N-linked (GlcNAc...) asparagine glycosylation. 2 disordered regions span residues 1080–1329 (KILD…SYDI) and 1351–1432 (HWHS…RERN). Composition is skewed to low complexity over residues 1092–1124 (NSRS…NRAS) and 1150–1235 (SSSS…SSSK). N-linked (GlcNAc...) asparagine glycosylation is present at asparagine 1206. The segment covering 1259-1269 (EGERSVHEQKQ) has biased composition (basic and acidic residues). Residues 1273 to 1299 (SSSSSSSRASSNSRSTSSSTSSSSESS) are compositionally biased toward low complexity. Residues 1306 to 1316 (WKQDREAETKR) show a composition bias toward basic and acidic residues. Residues 1319 to 1328 (SQFNSHSSYD) are compositionally biased toward polar residues. Residues 1357–1381 (RTSSSSSSSSSESGSSHSNSSSSDS) are compositionally biased toward low complexity. Residue asparagine 1375 is glycosylated (N-linked (GlcNAc...) asparagine). The span at 1397–1409 (SHRHGEKAAHSSR) shows a compositional bias: basic residues. Positions 1640–1818 (STCEVSKGDF…SWVLLEETCS (179 aa)) constitute a VWFD domain. Disulfide bonds link cysteine 1642-cysteine 1781 and cysteine 1665-cysteine 1817. Residues asparagine 1662, asparagine 1698, and asparagine 1703 are each glycosylated (N-linked (GlcNAc...) asparagine).

In terms of processing, phosvitin, an egg yolk storage protein, is one of the most highly phosphorylated (10%) proteins in nature. Post-translationally, cathepsin D is responsible for intraoocytic processing of vitellogenin. May contain intrachain disulfide bonds. As to expression, produced by the liver, secreted into the blood and then sequestered by receptor mediated endocytosis into growing oocytes, where it is generally cleaved, giving rise to the respective yolk components.

Its function is as follows. Precursor of the egg-yolk proteins that are sources of nutrients during early development of oviparous organisms. In terms of biological role, phosvitin is believed to be of importance in sequestering calcium, iron and other cations for the developing embryo. The protein is Vitellogenin-1 (VTG1) of Gallus gallus (Chicken).